Reading from the N-terminus, the 417-residue chain is UDP-N-acetylglucosamine 1-carboxyvinyltransferase (417 aa).

22–23 is a binding site for phosphoenolpyruvate; sequence KN. R92 provides a ligand contact to UDP-N-acetyl-alpha-D-glucosamine. C116 serves as the catalytic Proton donor. The residue at position 116 (C116) is a 2-(S-cysteinyl)pyruvic acid O-phosphothioketal. UDP-N-acetyl-alpha-D-glucosamine is bound by residues D304 and I326.

Belongs to the EPSP synthase family. MurA subfamily.

It localises to the cytoplasm. The catalysed reaction is phosphoenolpyruvate + UDP-N-acetyl-alpha-D-glucosamine = UDP-N-acetyl-3-O-(1-carboxyvinyl)-alpha-D-glucosamine + phosphate. The protein operates within cell wall biogenesis; peptidoglycan biosynthesis. Functionally, cell wall formation. Adds enolpyruvyl to UDP-N-acetylglucosamine. This is UDP-N-acetylglucosamine 1-carboxyvinyltransferase from Geotalea uraniireducens (strain Rf4) (Geobacter uraniireducens).